The sequence spans 419 residues: 3-isopropylmalate dehydratase large subunit (419 aa).

The [4Fe-4S] cluster site is built by cysteine 300, cysteine 360, and cysteine 363.

The protein belongs to the aconitase/IPM isomerase family. LeuC type 2 subfamily. In terms of assembly, heterodimer of LeuC and LeuD. The cofactor is [4Fe-4S] cluster.

It catalyses the reaction (2R,3S)-3-isopropylmalate = (2S)-2-isopropylmalate. The protein operates within amino-acid biosynthesis; L-leucine biosynthesis; L-leucine from 3-methyl-2-oxobutanoate: step 2/4. In terms of biological role, catalyzes the isomerization between 2-isopropylmalate and 3-isopropylmalate, via the formation of 2-isopropylmaleate. The protein is 3-isopropylmalate dehydratase large subunit of Nitratidesulfovibrio vulgaris (strain DP4) (Desulfovibrio vulgaris).